The following is a 467-amino-acid chain: Asparagine--tRNA ligase (467 aa).

The protein belongs to the class-II aminoacyl-tRNA synthetase family. In terms of assembly, homodimer.

Its subcellular location is the cytoplasm. It carries out the reaction tRNA(Asn) + L-asparagine + ATP = L-asparaginyl-tRNA(Asn) + AMP + diphosphate + H(+). The sequence is that of Asparagine--tRNA ligase from Legionella pneumophila (strain Paris).